We begin with the raw amino-acid sequence, 334 residues long: Glycerol-1-phosphate dehydrogenase [NAD(P)+] (334 aa).

NAD(+) contacts are provided by residues 77-81 and 99-102; these read GRPID and TTAS. Asp-104 is a substrate binding site. NAD(+) is bound at residue Ser-108. Asp-147 lines the substrate pocket. Zn(2+)-binding residues include Asp-147 and His-225. Residue His-229 coordinates substrate. His-246 is a binding site for Zn(2+).

Belongs to the glycerol-1-phosphate dehydrogenase family. Zn(2+) serves as cofactor.

It localises to the cytoplasm. The enzyme catalyses sn-glycerol 1-phosphate + NAD(+) = dihydroxyacetone phosphate + NADH + H(+). The catalysed reaction is sn-glycerol 1-phosphate + NADP(+) = dihydroxyacetone phosphate + NADPH + H(+). The protein operates within membrane lipid metabolism; glycerophospholipid metabolism. Functionally, catalyzes the NAD(P)H-dependent reduction of dihydroxyacetonephosphate (DHAP or glycerone phosphate) to glycerol 1-phosphate (G1P). The G1P thus generated is used as the glycerophosphate backbone of phospholipids in the cellular membranes of Archaea. The chain is Glycerol-1-phosphate dehydrogenase [NAD(P)+] from Methanococcus maripaludis (strain C6 / ATCC BAA-1332).